Here is a 467-residue protein sequence, read N- to C-terminus: Protein indeterminate-domain 6, chloroplastic (467 aa).

A chloroplast-targeting transit peptide spans 1-20 (MSSSYNTIALSSTPTFLLSS). The disordered stretch occupies residues 38–65 (TMVQQQPTSSVAPPPKKRRNQPGNPNPD). The segment covering 39 to 48 (MVQQQPTSSV) has biased composition (polar residues). A Phosphoserine modification is found at serine 72. 2 consecutive C2H2-type zinc fingers follow at residues 82–104 (FLCE…RRGH) and 123–153 (YLCP…YRKH). The C2H2-type 2; degenerate zinc-finger motif lies at 158 to 181 (WKCDKCSKRYAVQSDWKAHSKTCG). The Zn(2+) site is built by cysteine 160, cysteine 163, histidine 176, cysteine 180, cysteine 187, cysteine 189, histidine 202, and cysteine 206. Residues 185–208 (YRCDCGTIFSRRDSYITHRAFCDA) form a CCHC-type 2; atypical zinc finger. The segment at 195–207 (RRDSYITHRAFCD) is SHR-binding. Residues 440-467 (NGRGGRSGGPPLDAEMKFSHPNHPYGKA) are disordered.

Its subcellular location is the plastid. The protein localises to the chloroplast. Functionally, probable transcription factor. The protein is Protein indeterminate-domain 6, chloroplastic of Arabidopsis thaliana (Mouse-ear cress).